Reading from the N-terminus, the 728-residue chain is Protein Hook homolog 1 (728 aa).

Residue M1 is modified to N-acetylmethionine. The sufficient for interaction with microtubules stretch occupies residues 1-555 (MEETQPPPQP…LKQKLEAHME (555 aa)). The 117-residue stretch at 12-128 (LPLCDSLMIW…RLLQLILGCA (117 aa)) folds into the Calponin-homology (CH) domain. Coiled-coil stretches lie at residues 169–434 (PNDA…RCSQ) and 477–658 (LRLQ…AKFR). Residues 169 to 444 (PNDAVGELEQ…VQQDHLNQTD (276 aa)) are sufficient for homodimerization, interaction wit HOOK2, HOOK3 and AP4M1. At S235 the chain carries Phosphoserine. Positions 481 to 512 (QEGSENERIEELQEQLEQKHRKMNELETEQRL) are disordered. Residues 503-512 (MNELETEQRL) show a composition bias toward basic and acidic residues. The segment at 657–728 (FRDYEEKLIV…SVKVPATTSD (72 aa)) is sufficient for interaction with AKTIP and VPS18. T699 carries the post-translational modification Phosphothreonine. 2 positions are modified to phosphoserine: S719 and S727.

It belongs to the hook family. As to quaternary structure, self-associates. Component of the FTS/Hook/FHIP complex (FHF complex), composed of AKTIP/FTS, FHIP1B, and one or more members of the Hook family of proteins HOOK1, HOOK2, and HOOK3. Interacts directly with AKTIP/FTS, HOOK2 and HOOK3. Associates with several subunits of the homotypic vesicular sorting complex (the HOPS complex) including VPS16, VPS18, VPS39 and VPS41; these interactions may be indirect. Interacts with CCDC181. Interacts (via coiled-coil region) with RIMBP3 (via C-terminus). Interacts with LRGUK (via guanylate kinase-like domain). Interacts with microtubules. May interact with CLN3. Interacts with AP4M1; the interaction is direct, mediates the interaction between FTS-Hook-FHIP (FHF) complex and AP-4 and the perinuclear distribution of AP-4.

It localises to the cytoplasm. The protein resides in the cytoskeleton. Functionally, component of the FTS/Hook/FHIP complex (FHF complex). The FHF complex may function to promote vesicle trafficking and/or fusion via the homotypic vesicular protein sorting complex (the HOPS complex). FHF complex promotes the distribution of AP-4 complex to the perinuclear area of the cell. Required for spermatid differentiation. Probably involved in the positioning of the microtubules of the manchette and the flagellum in relation to the membrane skeleton. This chain is Protein Hook homolog 1, found in Homo sapiens (Human).